We begin with the raw amino-acid sequence, 624 residues long: Ceramide transfer protein (624 aa).

The segment covering 1 to 11 (MSDNQSWNSSG) has biased composition (polar residues). The segment at 1–24 (MSDNQSWNSSGSEEDPETESGPPV) is disordered. One can recognise a PH domain in the interval 23-117 (PVERCGVLSK…WVDAIEQHKT (95 aa)). Phosphoserine is present on residues serine 126, serine 132, and serine 135. The tract at residues 202–221 (DDEDDFPTTRSDGDFLHNTN) is disordered. Residues 263–303 (IELMVKREESWQKRHDREVEKRRRVEEAYKNVMEELKKKPR) adopt a coiled-coil conformation. Phosphoserine is present on serine 315. The FFAT motif lies at 321–327 (EFFDAVE). A Phosphotyrosine modification is found at tyrosine 372. Phosphoserine is present on residues serine 373, serine 377, and serine 380. Residues 389-618 (DVHRFSSQVE…FTSYVQEKTA (230 aa)) enclose the START domain. Positions 472, 493, 530, and 579 each coordinate an N-acylsphing-4-enine.

As to quaternary structure, interacts with VAPA and VAPB. Interaction with VAPB is less efficient than with VAPA. Interacts (via FFAT motif) with MOSPD2 (via MSP domain). Phosphorylation on Ser-132 decreases the affinity toward phosphatidylinositol 4-phosphate at Golgi membranes and reduces ceramide transfer activity. Inactivated by hyperphosphorylation of serine residues by CSNK1G2/CK1 that triggers dissociation from the Golgi complex, thus down-regulating ER-to-Golgi transport of ceramide and sphingomyelin synthesis.

It localises to the cytoplasm. It is found in the golgi apparatus. The protein localises to the endoplasmic reticulum. It carries out the reaction N-hexadecanoylsphing-4-enine(in) = N-hexadecanoylsphing-4-enine(out). Functionally, shelters ceramides and diacylglycerol lipids inside its START domain and mediates the intracellular trafficking of ceramides and diacylglycerol lipids in a non-vesicular manner. This Mus musculus (Mouse) protein is Ceramide transfer protein (Cert1).